A 530-amino-acid polypeptide reads, in one-letter code: Probable basic-leucine zipper transcription factor L (530 aa).

Low complexity-rich tracts occupy residues 1 to 17 (MYSP…SPES) and 24 to 39 (SINN…ANQS). The tract at residues 1–76 (MYSPSSPQSS…QSAALSRSRK (76 aa)) is disordered. The region spanning 55-118 (VKKRQVRLLK…FETKSRLEFL (64 aa)) is the bZIP domain. Positions 56–77 (KKRQVRLLKNRQSAALSRSRKK) are basic motif. Residues 83–104 (LESKAQELTHSTQELHVQYNKI) form a leucine-zipper region. Disordered stretches follow at residues 142 to 177 (NNIK…TTPV), 216 to 258 (SQNK…SPTP), and 389 to 481 (HHHH…SQIN). Composition is skewed to low complexity over residues 149–176 (RSNS…STTP) and 220–247 (NNNN…NTTN). Polar residues predominate over residues 248–257 (LLDQQQQSPT). Low complexity predominate over residues 436–478 (SSSPSSSSTSSPSTSSPSTPKSMGFPSPIFIGSSGSGPSSSGS).

The protein belongs to the bZIP family.

It is found in the nucleus. In terms of biological role, probable transcriptional regulator. The polypeptide is Probable basic-leucine zipper transcription factor L (bzpL) (Dictyostelium discoideum (Social amoeba)).